A 250-amino-acid polypeptide reads, in one-letter code: MPRKNYIYNLKPFFNPSKNERKKSTFICYAMKKVSEIDVARSHLNRALLPIDPKTGNVLPRFRRLNKHRACAMRAIVPAMLYYFNINSKLVEASIEKLADECGLSTLSDSGNKSITRASRLISEFLEPMGFVKCKKINSKSMSNYIPKKIFLTPMFFMLCGISPSEINHFLSKKIKPLKKLKKQEKSAFISFTDMKIISQLDERSARTKILNALINYYTASELTKIGPKGLKKKIDIEYSNLCNLYKKKS.

It belongs to the IncFII RepA family.

Its function is as follows. This protein is essential for plasmid replication; it is involved in copy control functions. The chain is Probable replication-associated protein repA2 (repA2) from Buchnera aphidicola subsp. Acyrthosiphon pisum (strain APS) (Acyrthosiphon pisum symbiotic bacterium).